We begin with the raw amino-acid sequence, 228 residues long: Lipoprotein-releasing system ATP-binding protein LolD (228 aa).

The ABC transporter domain maps to 6–228 (IKCLNVVKGY…EAGVLNKQGQ (223 aa)). 42 to 49 (GASGSGKS) provides a ligand contact to ATP.

The protein belongs to the ABC transporter superfamily. Lipoprotein translocase (TC 3.A.1.125) family. As to quaternary structure, the complex is composed of two ATP-binding proteins (LolD) and two transmembrane proteins (LolC and LolE).

It localises to the cell inner membrane. In terms of biological role, part of the ABC transporter complex LolCDE involved in the translocation of mature outer membrane-directed lipoproteins, from the inner membrane to the periplasmic chaperone, LolA. Responsible for the formation of the LolA-lipoprotein complex in an ATP-dependent manner. The polypeptide is Lipoprotein-releasing system ATP-binding protein LolD (Saccharophagus degradans (strain 2-40 / ATCC 43961 / DSM 17024)).